The primary structure comprises 47 residues: Variabilin (47 aa).

Positions 32–34 (RGD) match the Cell attachment site motif.

Contains 2 disulfide bonds. In terms of tissue distribution, expressed in salivary glands.

It localises to the secreted. In terms of biological role, potently inhibits platelet aggregation induced by ADP (IC(50)=157 nM, complete inhibition at 514 nM). Also inhibits platelet aggregation induced by collagen and by the thrombin receptor peptide SFLLRNP. Is a potent antagonist of the fibrinogen receptor glycoprotein IIb-IIIa (ITGA2B/ITGB3) and the vitronectin receptor alpha-v/beta-3 (ITGAV/ITGB3). The polypeptide is Variabilin (Dermacentor variabilis (American dog tick)).